Consider the following 254-residue polypeptide: Large ribosomal subunit protein uL4 (254 aa).

The disordered stretch occupies residues 45–70; it reads PWGNDPEAGKRTSAKGWGSGRGTARV.

This sequence belongs to the universal ribosomal protein uL4 family. Part of the 50S ribosomal subunit.

Its function is as follows. One of the primary rRNA binding proteins, this protein initially binds near the 5'-end of the 23S rRNA. It is important during the early stages of 50S assembly. It makes multiple contacts with different domains of the 23S rRNA in the assembled 50S subunit and ribosome. Functionally, forms part of the polypeptide exit tunnel. This Methanobrevibacter smithii (strain ATCC 35061 / DSM 861 / OCM 144 / PS) protein is Large ribosomal subunit protein uL4.